A 194-amino-acid polypeptide reads, in one-letter code: Imidazoleglycerol-phosphate dehydratase (194 aa).

The protein belongs to the imidazoleglycerol-phosphate dehydratase family.

It localises to the cytoplasm. The catalysed reaction is D-erythro-1-(imidazol-4-yl)glycerol 3-phosphate = 3-(imidazol-4-yl)-2-oxopropyl phosphate + H2O. It functions in the pathway amino-acid biosynthesis; L-histidine biosynthesis; L-histidine from 5-phospho-alpha-D-ribose 1-diphosphate: step 6/9. The protein is Imidazoleglycerol-phosphate dehydratase of Bacillus cereus (strain B4264).